Here is a 442-residue protein sequence, read N- to C-terminus: UDP-glycosyltransferase 79B8 (442 aa).

UDP-alpha-D-glucose contacts are provided by residues S260, 319–321, 336–344, and 358–361; these read VQQ, HCGPGTIWE, and LGDQ.

Belongs to the UDP-glycosyltransferase family.

The protein is UDP-glycosyltransferase 79B8 (UGT79B8) of Arabidopsis thaliana (Mouse-ear cress).